Here is a 793-residue protein sequence, read N- to C-terminus: Transcription factor opdR (793 aa).

Disordered stretches follow at residues Met1–Arg29, Thr60–Asn113, and Leu457–Glu476. The segment at residues Cys25–Cys53 is a DNA-binding region (zn(2)-C6 fungal-type).

The protein localises to the nucleus. Transcription factor; part of the gene cluster that mediates the biosynthesis of oxopyrrolidines, polyketide-amino acid hybrid compounds with feature structures of tetramic acid. This Penicillium oxalicum (strain 114-2 / CGMCC 5302) (Penicillium decumbens) protein is Transcription factor opdR.